Consider the following 638-residue polypeptide: Replication protein E1 (638 aa).

Residues 84 to 86 carry the Nuclear localization signal motif; the sequence is KRK. Ser90 carries the post-translational modification Phosphoserine; by host. The segment covering 90-119 has biased composition (polar residues); the sequence is SQNSPLQDITNQHRQQSDSQQNTHQVNNSQ. A disordered region spans residues 90 to 133; that stretch reads SQNSPLQDITNQHRQQSDSQQNTHQVNNSQAKRRAVDSVPDSGY. Residues 176–342 are DNA-binding region; it reads THVNSVTQIC…QTQLEHSFDD (167 aa). Residues 441–591 form the SF3 helicase domain; that stretch reads VNFIYFLQVL…FPFDSNGNPV (151 aa). Position 467-474 (467-474) interacts with ATP; the sequence is GPPNTGKS.

It belongs to the papillomaviridae E1 protein family. As to quaternary structure, can form hexamers. Interacts with E2 protein; this interaction increases E1 DNA binding specificity. Interacts with host DNA polymerase subunit POLA2. Interacts with host single stranded DNA-binding protein RPA1. Interacts with host TOP1; this interaction stimulates the enzymatic activity of TOP1. Phosphorylated.

Its subcellular location is the host nucleus. It catalyses the reaction Couples ATP hydrolysis with the unwinding of duplex DNA by translocating in the 3'-5' direction.. The enzyme catalyses ATP + H2O = ADP + phosphate + H(+). Functionally, ATP-dependent DNA 3'-5' helicase required for initiation of viral DNA replication. It forms a complex with the viral E2 protein. The E1-E2 complex binds to the replication origin which contains binding sites for both proteins. During the initial step, a dimer of E1 interacts with a dimer of protein E2 leading to a complex that binds the viral origin of replication with high specificity. Then, a second dimer of E1 displaces the E2 dimer in an ATP-dependent manner to form the E1 tetramer. Following this, two E1 monomers are added to each half of the site, which results in the formation of two E1 trimers on the viral ori. Subsequently, two hexamers will be created. The double hexamer acts as a bi-directional helicase machinery and unwinds the viral DNA and then recruits the host DNA polymerase to start replication. The chain is Replication protein E1 from Homo sapiens (Human).